A 165-amino-acid chain; its full sequence is LIM domain transcription factor LMO4.2 (165 aa).

LIM zinc-binding domains follow at residues 21 to 83 (KRCA…LFGN) and 85 to 147 (GACS…ALIN).

Acts as a positive cofactor of GATA transcription factors to establish the identity of the ventral mesoderm during gastrulation. Down-regulation in the dorsal mesoderm is necessary for the proper formation of this territory since, when present, lmo4 may bind ldb1 and restrict the availability of this cofactor for Spemman organizer transcription factors. At neurula stages, suppresses primary neuron differentiation and modulates gene expression at the Isthmic Organizer of the midbrain-hindbrain boundary. The protein is LIM domain transcription factor LMO4.2 (lmo4.2) of Xenopus tropicalis (Western clawed frog).